We begin with the raw amino-acid sequence, 269 residues long: UPF0494 membrane protein C1348.01 (269 aa).

4 helical membrane passes run 107-127 (WPLL…KFEV), 144-164 (IWVP…SLIF), 177-197 (GVII…IAAL), and 201-221 (ITGL…LSLG).

Belongs to the UPF0494 family.

The protein resides in the vacuole membrane. This Schizosaccharomyces pombe (strain 972 / ATCC 24843) (Fission yeast) protein is UPF0494 membrane protein C1348.01.